A 101-amino-acid polypeptide reads, in one-letter code: uncharacterized protein (101 aa).

The protein localises to the mitochondrion. This is an uncharacterized protein from Arabidopsis thaliana (Mouse-ear cress).